A 167-amino-acid chain; its full sequence is Ribosome-binding factor A (167 aa).

The tract at residues 127 to 167 (SRANAQYAGDADPYKHDEPDDDDFDDDDDVEVEDWDDDDEA) is disordered. The span at 145-167 (PDDDDFDDDDDVEVEDWDDDDEA) shows a compositional bias: acidic residues.

This sequence belongs to the RbfA family. In terms of assembly, monomer. Binds 30S ribosomal subunits, but not 50S ribosomal subunits or 70S ribosomes.

The protein resides in the cytoplasm. Its function is as follows. One of several proteins that assist in the late maturation steps of the functional core of the 30S ribosomal subunit. Associates with free 30S ribosomal subunits (but not with 30S subunits that are part of 70S ribosomes or polysomes). Required for efficient processing of 16S rRNA. May interact with the 5'-terminal helix region of 16S rRNA. The sequence is that of Ribosome-binding factor A from Bifidobacterium adolescentis (strain ATCC 15703 / DSM 20083 / NCTC 11814 / E194a).